The chain runs to 333 residues: Probable HTH-type transcriptional repressor ExuR (333 aa).

One can recognise an HTH lacI-type domain in the interval 2 to 56; sequence VTIKDIAKLANVSHTTVSRALNNSPYIKEHTKKKILELAEQLNYTPNVNAKSLAM. Positions 4–23 form a DNA-binding region, H-T-H motif; it reads IKDIAKLANVSHTTVSRALN.

Its function is as follows. Transcriptional repressor for the exu locus which is required for galacturonate utilization. The chain is Probable HTH-type transcriptional repressor ExuR (exuR) from Bacillus subtilis (strain 168).